A 322-amino-acid chain; its full sequence is Light-dependent protochlorophyllide reductase (322 aa).

This sequence belongs to the short-chain dehydrogenases/reductases (SDR) family. POR subfamily.

It catalyses the reaction chlorophyllide a + NADP(+) = protochlorophyllide a + NADPH + H(+). It functions in the pathway porphyrin-containing compound metabolism; chlorophyll biosynthesis. Phototransformation of protochlorophyllide (Pchlide) to chlorophyllide (Chlide). This chain is Light-dependent protochlorophyllide reductase (por), found in Synechocystis sp. (strain ATCC 27184 / PCC 6803 / Kazusa).